We begin with the raw amino-acid sequence, 160 residues long: Large ribosomal subunit protein uL15 (160 aa).

Residues 1 to 13 show a composition bias toward basic and acidic residues; it reads MKLNEIRDNEGAR. The segment at 1–41 is disordered; it reads MKLNEIRDNEGARKSRIRVGRGIGSGKGKTGGRGVKGQKSR. The span at 21–35 shows a compositional bias: gly residues; sequence RGIGSGKGKTGGRGV.

The protein belongs to the universal ribosomal protein uL15 family. Part of the 50S ribosomal subunit.

Its function is as follows. Binds to the 23S rRNA. This is Large ribosomal subunit protein uL15 from Parvibaculum lavamentivorans (strain DS-1 / DSM 13023 / NCIMB 13966).